A 433-amino-acid polypeptide reads, in one-letter code: Probable exopolygalacturonase X (433 aa).

The signal sequence occupies residues 1 to 21; that stretch reads MKLTQATTLLLSLGLSLPVEG. The disordered stretch occupies residues 30 to 54; that stretch reads VGPKPPFRPLPASTPRNKTCQVQSN. The segment covering 43 to 54 has biased composition (polar residues); that stretch reads TPRNKTCQVQSN. N-linked (GlcNAc...) asparagine glycans are attached at residues Asn-46, Asn-127, and Asn-197. The stretch at 229-250 is one PbH1 1 repeat; that stretch reads SSNIVIQNSVINNGDDCVSFKP. The active-site Proton donor is the Asp-243. A disulfide bridge links Cys-245 with Cys-262. N-linked (GlcNAc...) asparagine glycosylation is found at Asn-251 and Asn-263. The PbH1 2 repeat unit spans residues 252–272; the sequence is STEILVQNLHCNGSHGISVGS. Residue His-266 is part of the active site. Residues Asn-290, Asn-295, Asn-327, Asn-352, and Asn-362 are each glycosylated (N-linked (GlcNAc...) asparagine). One copy of the PbH1 3 repeat lies at 325-346; sequence VQNITYDKMYIENVDWAIEVTQ. Residues 360–403 form a PbH1 4 repeat; it reads PSNLTISDVYFNDLTGVTSGKNDPNVGTIICSSPDVCSGIHATN. A disulfide bridge connects residues Cys-390 and Cys-396.

Belongs to the glycosyl hydrolase 28 family.

Its subcellular location is the secreted. The catalysed reaction is [(1-&gt;4)-alpha-D-galacturonosyl](n) + H2O = alpha-D-galacturonate + [(1-&gt;4)-alpha-D-galacturonosyl](n-1). Its function is as follows. Specific in hydrolyzing the terminal glycosidic bond of polygalacturonic acid and oligogalacturonates. The sequence is that of Probable exopolygalacturonase X (pgaX) from Aspergillus flavus (strain ATCC 200026 / FGSC A1120 / IAM 13836 / NRRL 3357 / JCM 12722 / SRRC 167).